Here is a 317-residue protein sequence, read N- to C-terminus: Metaxin-1 (317 aa).

Glycyl lysine isopeptide (Lys-Gly) (interchain with G-Cter in ubiquitin) cross-links involve residues Lys-38, Lys-41, Lys-78, and Lys-168. Residues 272-292 (ILSVLAGLAAMVGYALLSGIV) form a helical membrane-spanning segment.

Belongs to the metaxin family. In terms of assembly, interacts with MTX2/metaxin-2. Associates with the mitochondrial contact site and cristae organizing system (MICOS) complex, composed of at least MICOS10/MIC10, CHCHD3/MIC19, CHCHD6/MIC25, APOOL/MIC27, IMMT/MIC60, APOO/MIC23/MIC26 and QIL1/MIC13. This complex was also known under the names MINOS or MitOS complex. The MICOS complex associates with mitochondrial outer membrane proteins SAMM50, MTX1 and MTX2 (together described as components of the mitochondrial outer membrane sorting assembly machinery (SAM) complex) and DNAJC11, mitochondrial inner membrane protein TMEM11 and with HSPA9. The MICOS and SAM complexes together with DNAJC11 are part of a large protein complex spanning both membranes termed the mitochondrial intermembrane space bridging (MIB) complex. Interacts with ARMC1. Ubiquitinated by PRKN during mitophagy, leading to its degradation and enhancement of mitophagy. Deubiquitinated by USP30. Ubiquitous. Higher levels are seen in the kidney as compared to other tissues.

It localises to the mitochondrion outer membrane. Its function is as follows. Involved in transport of proteins into the mitochondrion. Essential for embryonic development. This is Metaxin-1 (Mtx1) from Mus musculus (Mouse).